The sequence spans 71 residues: Large ribosomal subunit protein bL31 (71 aa).

Residues cysteine 16, cysteine 18, cysteine 36, and cysteine 39 each contribute to the Zn(2+) site.

This sequence belongs to the bacterial ribosomal protein bL31 family. Type A subfamily. Part of the 50S ribosomal subunit. Requires Zn(2+) as cofactor.

Its function is as follows. Binds the 23S rRNA. The sequence is that of Large ribosomal subunit protein bL31 from Thermotoga maritima (strain ATCC 43589 / DSM 3109 / JCM 10099 / NBRC 100826 / MSB8).